Here is a 526-residue protein sequence, read N- to C-terminus: Tyrosine 2,3-aminomutase (526 aa).

The active-site Proton donor/acceptor is Tyr41. His71 is a binding site for substrate. The segment at residues 130 to 132 is a cross-link (5-imidazolinone (Ala-Gly)); the sequence is ASG. Ser131 is subject to 2,3-didehydroalanine (Ser). Residues Asn183 and Arg288 each contribute to the substrate site.

It belongs to the TAL/TAM family. As to quaternary structure, homotetramer; dimer of dimers. Contains an active site 4-methylidene-imidazol-5-one (MIO), which is formed autocatalytically by cyclization and dehydration of residues Ala-Ser-Gly.

It carries out the reaction L-tyrosine = 3-amino-3-(4-hydroxyphenyl)propanoate. It catalyses the reaction L-tyrosine = (E)-4-coumarate + NH4(+). In terms of biological role, has aminomutase and, to a much lesser extent, ammonia-lyase activity. Primarily, catalyzes the rearrangement of L-tyrosine to S-beta-tyrosine, which is probably incorporated into secondary metabolite myxovalargin. The aminomutase activity exclusively produces S-beta-tyrosine. The sequence is that of Tyrosine 2,3-aminomutase from Myxococcus sp. (strain Mx-B0).